We begin with the raw amino-acid sequence, 630 residues long: Mannosyl-oligosaccharide 1,2-alpha-mannosidase IC (630 aa).

Over 1–22 the chain is Cytoplasmic; sequence MLMRKVPGFVPASPWGLRLPQK. Residues 23 to 43 form a helical; Signal-anchor for type II membrane protein membrane-spanning segment; it reads FLFLLFLSGLVTLCFGALFLL. The Lumenal portion of the chain corresponds to 44 to 630; sequence PHSSRLKRLF…DSSGRAWGRH (587 aa). Residues 74-140 are disordered; sequence PAREQEPPPN…ASRPGDEGVP (67 aa). Residues 80–89 are compositionally biased toward pro residues; the sequence is PPPNPAPAAP. Residues 102-113 are compositionally biased toward basic residues; it reads PRRRKGGLRRTR. At Ser-164 the chain carries Phosphoserine. N-linked (GlcNAc...) asparagine glycosylation is present at Asn-250. Cys-453 and Cys-485 are joined by a disulfide. Glu-499 serves as the catalytic Proton donor. Thr-610 contributes to the Ca(2+) binding site. A glycan (N-linked (GlcNAc...) asparagine) is linked at Asn-618.

This sequence belongs to the glycosyl hydrolase 47 family. Ca(2+) is required as a cofactor. As to expression, expressed in most tissues with the exception of lung, muscle and pancreas. Highly expressed in placenta.

The protein localises to the golgi apparatus membrane. It carries out the reaction N(4)-(alpha-D-Man-(1-&gt;2)-alpha-D-Man-(1-&gt;2)-alpha-D-Man-(1-&gt;3)-[alpha-D-Man-(1-&gt;2)-alpha-D-Man-(1-&gt;3)-[alpha-D-Man-(1-&gt;2)-alpha-D-Man-(1-&gt;6)]-alpha-D-Man-(1-&gt;6)]-beta-D-Man-(1-&gt;4)-beta-D-GlcNAc-(1-&gt;4)-beta-D-GlcNAc)-L-asparaginyl-[protein] (N-glucan mannose isomer 9A1,2,3B1,2,3) + 4 H2O = N(4)-(alpha-D-Man-(1-&gt;3)-[alpha-D-Man-(1-&gt;3)-[alpha-D-Man-(1-&gt;6)]-alpha-D-Man-(1-&gt;6)]-beta-D-Man-(1-&gt;4)-beta-D-GlcNAc-(1-&gt;4)-beta-D-GlcNAc)-L-asparaginyl-[protein] (N-glucan mannose isomer 5A1,2) + 4 beta-D-mannose. The catalysed reaction is N(4)-(alpha-D-Man-(1-&gt;2)-alpha-D-Man-(1-&gt;2)-alpha-D-Man-(1-&gt;3)-[alpha-D-Man-(1-&gt;3)-[alpha-D-Man-(1-&gt;2)-alpha-D-Man-(1-&gt;6)]-alpha-D-Man-(1-&gt;6)]-beta-D-Man-(1-&gt;4)-beta-D-GlcNAc-(1-&gt;4)-beta-D-GlcNAc)-L-asparaginyl-[protein] (N-glucan mannose isomer 8A1,2,3B1,3) + 3 H2O = N(4)-(alpha-D-Man-(1-&gt;3)-[alpha-D-Man-(1-&gt;3)-[alpha-D-Man-(1-&gt;6)]-alpha-D-Man-(1-&gt;6)]-beta-D-Man-(1-&gt;4)-beta-D-GlcNAc-(1-&gt;4)-beta-D-GlcNAc)-L-asparaginyl-[protein] (N-glucan mannose isomer 5A1,2) + 3 beta-D-mannose. It participates in protein modification; protein glycosylation. With respect to regulation, inhibited by both 1-deoxymannojirimycin and kifunensine. Involved in the maturation of Asn-linked oligosaccharides. Trim alpha-1,2-linked mannose residues from Man(9)GlcNAc(2) to produce first Man(8)GlcNAc(2) then Man(6)GlcNAc and a small amount of Man(5)GlcNAc. The polypeptide is Mannosyl-oligosaccharide 1,2-alpha-mannosidase IC (MAN1C1) (Homo sapiens (Human)).